We begin with the raw amino-acid sequence, 458 residues long: Bifunctional protein GlmU (458 aa).

The interval 1-230 is pyrophosphorylase; sequence MHKRTAVVLA…EREILGINSR (230 aa). UDP-N-acetyl-alpha-D-glucosamine is bound by residues 9–12, Lys-23, Gln-73, and 78–79; these read LAAG and GT. Mg(2+) is bound at residue Asp-103. Gly-140, Glu-155, Asn-170, and Asn-228 together coordinate UDP-N-acetyl-alpha-D-glucosamine. A Mg(2+)-binding site is contributed by Asn-228. Positions 231–251 are linker; the sequence is VQLAEAEAVLQDRLRRKWMDA. The segment at 252–458 is N-acetyltransferase; that stretch reads GVTLIDPPSV…FLGRKHKGSQ (207 aa). Residues Arg-333 and Lys-351 each contribute to the UDP-N-acetyl-alpha-D-glucosamine site. His-363 serves as the catalytic Proton acceptor. UDP-N-acetyl-alpha-D-glucosamine-binding residues include Tyr-366 and Asn-377. Residues Ala-380, 386 to 387, Ser-405, Ala-423, and Arg-440 contribute to the acetyl-CoA site; that span reads NY.

In the N-terminal section; belongs to the N-acetylglucosamine-1-phosphate uridyltransferase family. This sequence in the C-terminal section; belongs to the transferase hexapeptide repeat family. Homotrimer. The cofactor is Mg(2+).

The protein resides in the cytoplasm. It carries out the reaction alpha-D-glucosamine 1-phosphate + acetyl-CoA = N-acetyl-alpha-D-glucosamine 1-phosphate + CoA + H(+). The enzyme catalyses N-acetyl-alpha-D-glucosamine 1-phosphate + UTP + H(+) = UDP-N-acetyl-alpha-D-glucosamine + diphosphate. The protein operates within nucleotide-sugar biosynthesis; UDP-N-acetyl-alpha-D-glucosamine biosynthesis; N-acetyl-alpha-D-glucosamine 1-phosphate from alpha-D-glucosamine 6-phosphate (route II): step 2/2. It functions in the pathway nucleotide-sugar biosynthesis; UDP-N-acetyl-alpha-D-glucosamine biosynthesis; UDP-N-acetyl-alpha-D-glucosamine from N-acetyl-alpha-D-glucosamine 1-phosphate: step 1/1. Its pathway is bacterial outer membrane biogenesis; LPS lipid A biosynthesis. Catalyzes the last two sequential reactions in the de novo biosynthetic pathway for UDP-N-acetylglucosamine (UDP-GlcNAc). The C-terminal domain catalyzes the transfer of acetyl group from acetyl coenzyme A to glucosamine-1-phosphate (GlcN-1-P) to produce N-acetylglucosamine-1-phosphate (GlcNAc-1-P), which is converted into UDP-GlcNAc by the transfer of uridine 5-monophosphate (from uridine 5-triphosphate), a reaction catalyzed by the N-terminal domain. This Heliobacterium modesticaldum (strain ATCC 51547 / Ice1) protein is Bifunctional protein GlmU.